A 542-amino-acid polypeptide reads, in one-letter code: MVSVKASAAEKKEFLQSQIDEIEKWWSEPRWKDTKRIYSAYEIAKRRGSVKPNTFPSTVMSQKLFKILGEHAKNGTVSKTFGALDPVQVTQMSKYLDTIYVSGWQCSSTASTSNEPGPDLADYPMDTVPNKVEHLFKAQQFHDRKQWERICDGTIEESEIIDYLTPIVADGDAGHGGLTAVFKLTKMFIERGAAGIHIEDQTSTNKKCGHMAGRCVIPVQEHINRLITCRMAADVLGSDLILVARTDSEAATLLSSTADSRDHYFILGASNPAVKGKPLNDLLNKAILDGATIDDLQTIEKEWLAKADVKLFHEVFADAAKAAGKDQSVIDQFNSKVNPLSETSIYEMQALAKELLGTELFFDWDLPRGREGLYRYQGGTQCSVMRARAFAPYADLCWMESNYPDYEQAKEFAEGVTAKFPGKWMAYNLSPSFNWTKAMSVDEQETFIQRLGDLGYIWQFITLAGLHTSGLAIEQFSKNFAKLGMKAYAQDIQKKELDNGIDMVKHQKWSGAEYIDGLLRLAQGGLAATAAMGQGVTEDQFK.

102–104 (SGW) serves as a coordination point for substrate. Aspartate 170 contributes to the Mg(2+) binding site. Cysteine 208 (proton acceptor) is an active-site residue. Substrate contacts are provided by residues 209–210 (GH), arginine 245, 428–432 (NLSPS), and threonine 462.

It belongs to the isocitrate lyase/PEP mutase superfamily. Isocitrate lyase family. In terms of assembly, homotetramer. Requires Mg(2+) as cofactor.

The protein resides in the glyoxysome. The enzyme catalyses D-threo-isocitrate = glyoxylate + succinate. It catalyses the reaction (2S,3R)-3-hydroxybutane-1,2,3-tricarboxylate = pyruvate + succinate. It participates in carbohydrate metabolism; glyoxylate cycle; (S)-malate from isocitrate: step 1/2. Functionally, catalyzes the formation of succinate and glyoxylate from isocitrate, a key step of the glyoxylate cycle, which operates as an anaplerotic route for replenishing the tricarboxylic acid cycle. Required for growth on ethanol or acetate, but dispensable when fermentable carbon sources are available. Also acts on 2-methylisocitrate. This is Isocitrate lyase from Kluyveromyces lactis (strain ATCC 8585 / CBS 2359 / DSM 70799 / NBRC 1267 / NRRL Y-1140 / WM37) (Yeast).